We begin with the raw amino-acid sequence, 313 residues long: ADP-L-glycero-D-manno-heptose-6-epimerase (313 aa).

Residues 10-11 (FI), 31-32 (DD), Arg-38, Lys-53, 75-79 (EGACS), and Asn-92 each bind NADP(+). The active-site Proton acceptor is Tyr-139. Lys-143 is an NADP(+) binding site. Asn-168 contributes to the substrate binding site. NADP(+) contacts are provided by Val-169 and Lys-177. Lys-177 acts as the Proton acceptor in catalysis. Residues Lys-179, His-186, 200–203 (FEGW), Arg-213, and Tyr-277 contribute to the substrate site.

The protein belongs to the NAD(P)-dependent epimerase/dehydratase family. HldD subfamily. In terms of assembly, homopentamer. It depends on NADP(+) as a cofactor.

It catalyses the reaction ADP-D-glycero-beta-D-manno-heptose = ADP-L-glycero-beta-D-manno-heptose. The protein operates within nucleotide-sugar biosynthesis; ADP-L-glycero-beta-D-manno-heptose biosynthesis; ADP-L-glycero-beta-D-manno-heptose from D-glycero-beta-D-manno-heptose 7-phosphate: step 4/4. Functionally, catalyzes the interconversion between ADP-D-glycero-beta-D-manno-heptose and ADP-L-glycero-beta-D-manno-heptose via an epimerization at carbon 6 of the heptose. In Marinobacter nauticus (strain ATCC 700491 / DSM 11845 / VT8) (Marinobacter aquaeolei), this protein is ADP-L-glycero-D-manno-heptose-6-epimerase.